The chain runs to 138 residues: Acidic phospholipase A2 Ts-A3 (138 aa).

An N-terminal signal peptide occupies residues 1 to 16; the sequence is MRTLWIMAVLLLGVEG. Intrachain disulfides connect Cys42–Cys132, Cys44–Cys60, Cys59–Cys111, Cys65–Cys138, Cys66–Cys104, Cys73–Cys97, and Cys91–Cys102. Residues Tyr43, Gly45, and Gly47 each coordinate Ca(2+). Residue His63 is part of the active site. Asp64 contacts Ca(2+). Residue Asp105 is part of the active site.

Ca(2+) is required as a cofactor. In terms of tissue distribution, expressed by the venom gland.

It is found in the secreted. The catalysed reaction is a 1,2-diacyl-sn-glycero-3-phosphocholine + H2O = a 1-acyl-sn-glycero-3-phosphocholine + a fatty acid + H(+). In terms of biological role, snake venom phospholipase A2 (PLA2) that shows a moderate inhibition of ADP-induced human platelet aggregation when tested on platelet rich plasma. Exhibits high hydrolytic activities and prefers the anionic micelles (dPPC with deoxycholate) to the zwitterionic micelles (dPPC with Triton X-100). PLA2 catalyzes the calcium-dependent hydrolysis of the 2-acyl groups in 3-sn-phosphoglycerides. This chain is Acidic phospholipase A2 Ts-A3, found in Trimeresurus stejnegeri (Chinese green tree viper).